A 198-amino-acid chain; its full sequence is GTP-binding protein RHO1 (198 aa).

16-23 serves as a coordination point for GTP; it reads GDGACGKT. Positions 38 to 46 match the Effector region motif; the sequence is YVPTVFENY. Residues 63–67 and 121–124 each bind GTP; these read DTAGQ and CKSD. Cys-195 bears the Cysteine methyl ester mark. Cys-195 is lipidated: S-geranylgeranyl cysteine. Positions 196–198 are cleaved as a propeptide — removed in mature form; the sequence is VVL.

Belongs to the small GTPase superfamily. Rho family.

Its subcellular location is the cell membrane. In Candida albicans (strain SC5314 / ATCC MYA-2876) (Yeast), this protein is GTP-binding protein RHO1 (RHO1).